Here is a 448-residue protein sequence, read N- to C-terminus: Gamete and mating-type specific protein A (448 aa).

An N-terminal signal peptide occupies residues 1–19; sequence MKLILVLLCLISTLFVVKG. Positions 30 to 157 constitute an SCP domain; it reads VSYHNKWRSS…PDKSEVSCSY (128 aa). Asparagine 55, asparagine 98, and asparagine 119 each carry an N-linked (GlcNAc...) asparagine glycan. The disordered stretch occupies residues 171–242; that stretch reads PKTTTPAPTT…PTTPAPTSTL (72 aa). A compositionally biased stretch (pro residues) spans 178–236; the sequence is PTTPAPTTPKPTTPAPTTPKPTTPAPTTPKPTTPAPTTPKPTTPAPTTPKPTTPAPTTP. Active-site residues include cysteine 262, histidine 397, and asparagine 415.

Belongs to the peptidase C1 family.

Its subcellular location is the secreted. Functionally, thiol protease that seems to be involved in the sexual development. The sequence is that of Gamete and mating-type specific protein A (gmsA) from Dictyostelium discoideum (Social amoeba).